The following is a 161-amino-acid chain: Ferric uptake regulation protein 1 (161 aa).

2 residues coordinate Zn(2+): cysteine 94 and cysteine 97.

This sequence belongs to the Fur family.

The protein resides in the cytoplasm. Functionally, acts as a global negative controlling element, employing Fe(2+) as a cofactor to bind the operator of the repressed genes. The polypeptide is Ferric uptake regulation protein 1 (fur1) (Mycolicibacterium fortuitum (Mycobacterium fortuitum)).